Reading from the N-terminus, the 158-residue chain is NADH-quinone oxidoreductase subunit B 2 (158 aa).

Cys-37, Cys-38, Cys-102, and Cys-132 together coordinate [4Fe-4S] cluster.

The protein belongs to the complex I 20 kDa subunit family. In terms of assembly, NDH-1 is composed of 14 different subunits. Subunits NuoB, C, D, E, F, and G constitute the peripheral sector of the complex. [4Fe-4S] cluster serves as cofactor.

The protein resides in the cell inner membrane. The catalysed reaction is a quinone + NADH + 5 H(+)(in) = a quinol + NAD(+) + 4 H(+)(out). NDH-1 shuttles electrons from NADH, via FMN and iron-sulfur (Fe-S) centers, to quinones in the respiratory chain. Couples the redox reaction to proton translocation (for every two electrons transferred, four hydrogen ions are translocated across the cytoplasmic membrane), and thus conserves the redox energy in a proton gradient. This is NADH-quinone oxidoreductase subunit B 2 from Nitrosospira multiformis (strain ATCC 25196 / NCIMB 11849 / C 71).